Reading from the N-terminus, the 299-residue chain is Protoheme IX farnesyltransferase 1 (299 aa).

A run of 8 helical transmembrane segments spans residues 25–45 (VVVL…RAGV), 47–67 (WTVL…AAAV), 95–115 (TGAL…LLTF), 119–139 (LTAW…TGFL), 147–167 (IVIG…AATG), 173–193 (PLLL…ALAI), 226–246 (ALLA…LYLI), and 279–299 (IWYL…LLNL).

Belongs to the UbiA prenyltransferase family. Protoheme IX farnesyltransferase subfamily.

The protein resides in the cell inner membrane. It catalyses the reaction heme b + (2E,6E)-farnesyl diphosphate + H2O = Fe(II)-heme o + diphosphate. The protein operates within porphyrin-containing compound metabolism; heme O biosynthesis; heme O from protoheme: step 1/1. In terms of biological role, converts heme B (protoheme IX) to heme O by substitution of the vinyl group on carbon 2 of heme B porphyrin ring with a hydroxyethyl farnesyl side group. This Pseudomonas fluorescens (strain Pf0-1) protein is Protoheme IX farnesyltransferase 1.